A 5125-amino-acid polypeptide reads, in one-letter code: Usherin (5125 aa).

The N-terminal stretch at 1-33 is a signal peptide; sequence MYYLALSSGFLGQAIKTSILAYLASVLLAASQG. Asn120, Asn229, Asn257, Asn273, Asn414, Asn447, and Asn468 each carry an N-linked (GlcNAc...) asparagine glycan. The Laminin N-terminal domain maps to 273–513; it reads NVSLTNREIL…AVDEITIIGR (241 aa). Disulfide bonds link Cys514-Cys523, Cys516-Cys532, Cys534-Cys545, Cys548-Cys568, Cys571-Cys580, Cys573-Cys601, Cys604-Cys613, Cys616-Cys634, Cys637-Cys651, Cys639-Cys658, Cys660-Cys669, Cys672-Cys687, Cys690-Cys704, Cys692-Cys711, Cys713-Cys722, Cys725-Cys740, Cys743-Cys755, Cys745-Cys762, Cys764-Cys773, Cys776-Cys788, Cys791-Cys804, Cys793-Cys811, Cys813-Cys822, Cys825-Cys840, Cys843-Cys857, Cys845-Cys864, Cys866-Cys875, Cys878-Cys893, Cys896-Cys909, Cys898-Cys916, Cys918-Cys927, Cys930-Cys944, Cys947-Cys959, Cys949-Cys966, Cys981-Cys995, Cys998-Cys1010, Cys1000-Cys1017, Cys1019-Cys1028, and Cys1031-Cys1046. Laminin EGF-like domains are found at residues 514 to 570, 571 to 636, 637 to 689, 690 to 742, 743 to 790, 791 to 842, 843 to 895, 896 to 946, 947 to 997, and 998 to 1048; these read CQCH…NCKP, CQCH…VCKH, CDCN…CCRP, CDCN…GCEP, CHCN…ACEV, CDCN…LCLP, CNCE…GCQA, CDCD…GCLP, CLCH…RCRP, and CHCH…ACSK. N-linked (GlcNAc...) asparagine glycosylation occurs at Asn646. Asn835 and Asn852 each carry an N-linked (GlcNAc...) asparagine glycan. Asn884 carries an N-linked (GlcNAc...) asparagine glycan. A glycan (N-linked (GlcNAc...) asparagine) is linked at Asn940. Asn1007 carries N-linked (GlcNAc...) asparagine glycosylation. Fibronectin type-III domains are found at residues 1054-1142, 1146-1240, 1241-1356, and 1357-1461; these read PPPR…TKPE, GHLN…APPQ, RQEP…SAPV, and FMAA…AAPA. 6 N-linked (GlcNAc...) asparagine glycosylation sites follow: Asn1067, Asn1149, Asn1170, Asn1221, Asn1304, and Asn1381. 2 Laminin G-like domains span residues 1510–1697 and 1702–1879; these read TKGT…WEGC and EEGV…QDGC. 2 disulfide bridges follow: Cys1660–Cys1697 and Cys1850–Cys1879. Fibronectin type-III domains lie at 1857–1943, 1945–2042, 2043–2132, 2133–2230, 2231–2318, 2319–2421, 2425–2519, 2520–2613, 2614–2709, 2713–2806, 2807–2910, 2914–3005, 3009–3099, 3380–3485, 3486–3577, 3580–3670, 3672–3762, 3765–3852, 3853–3950, 3951–4054, 4055–4143, 4144–4251, 4252–4344, 4345–4432, 4433–4517, 4518–4620, 4625–4720, 4721–4813, and 4814–4916; these read TRGA…SAPH, VPTP…TPQE, APQE…LPPE, RVDP…TVPE, GVPA…APPE, GTVN…MPPG, GLLS…TTED, KPGP…TPEG, IPGP…TRPS, GVQP…THPA, LPQE…TLAG, RGAT…TWEE, GMRP…TPSG, ATEE…TRED, VPQG…TRGV, SVPP…AAPQ, VWVT…TPED, PPCN…TLEA, APVG…TLEA, PPQD…SAPS, GLMN…APPD, SQMA…APPD, GLSP…ASPA, GVSP…APPE, DMDP…TSPS, APSG…IPPL, PHLE…TGPA, PPEG…THPA, and PPSG…TKKE. Residues 1930 to 1950 are disordered; the sequence is SDWSRGRTLGSAPHSVPTPSR.

Interacts with collagen IV and fibronectin via its laminin EGF-like domains. Interaction with collagen may be required for stable integration into the basement membrane. Interacts with NINL. Interacts with USH1C. Interacts (via the cytoplasmic region) with PDZD7. Component of USH2 complex, composed of ADGRV1, PDZD7, USH2A and WHRN. Interacts with ADGRV1/MASS1 (via N-terminal PDZ domain). Interacts (via the cytoplasmic region) with WHRN. Interacts (via the cytoplasmic region) with VEZT and MYO7A (via MyTH4-FERM domains); the interaction associates VEZT with the USH2 complex at the stereocilia base. Present in the synaptic terminals of inner ear hair cells (at protein level). Predominantly expressed in the retina and cochlea. Weakly expressed in brain and kidney. Detectable from E17 in the neural epithelium, but not in the retinal pigment epithelium (RPE) of the developing retina. After birth, it is expressed at P7 and remains expressed during adulthood.

It localises to the secreted. The protein localises to the cell projection. Its subcellular location is the stereocilium membrane. The protein resides in the photoreceptor inner segment. Functionally, involved in hearing and vision as member of the USH2 complex. In the inner ear, required for the hair bundle ankle formation, which connects growing stereocilia in developing cochlear hair cells. In retina photoreceptors, the USH2 complex is required for the maintenance of periciliary membrane complex that seems to play a role in regulating intracellular protein transport. In Rattus norvegicus (Rat), this protein is Usherin (Ush2a).